Here is a 652-residue protein sequence, read N- to C-terminus: Potassium voltage-gated channel subfamily KQT member 1 (652 aa).

Over 1 to 110 (MSSEQPAWTF…YNFLERPTGW (110 aa)) the chain is Cytoplasmic. A helical membrane pass occupies residues 111–132 (KCFVYHFTVFLIVLICLIFSVL). Topologically, residues 133 to 143 (STIQQYNNLAT) are extracellular. The chain crosses the membrane as a helical span at residues 144-166 (ETLFWMEIVLVVFFGAEYVVRLW). Residues 167-182 (SAGCRSKYVGVWGRLR) are Cytoplasmic-facing. Residues 183–208 (FARKPISVIDLIVVVASVIVLCVGSN) traverse the membrane as a helical segment. The Extracellular segment spans residues 209–216 (GQVFATSA). Residues 217 to 232 (IRGIRFLQILRMLHVD) form a helical; Voltage-sensor membrane-spanning segment. Residues 228 to 236 (MLHVDRQGG) are interaction with KCNE3. The Cytoplasmic segment spans residues 233 to 250 (RQGGTWRLLGSVVFIHRQ). Residue Gln234 participates in a 1,2-diacyl-sn-glycero-3-phospho-(1D-myo-inositol-4,5-bisphosphate) binding. Residues 251–273 (ELITTLYIGFLGLIFSSYFVYLA) form a helical membrane-spanning segment. Over 274–289 (EKDAIDSSGEYQFGSY) the chain is Extracellular. The pore-forming intramembrane region spans 290 to 310 (ADALWWGVVTVTTIGYGDKVP). The Extracellular segment spans residues 311 to 312 (QT). Residues 313-338 (WIGKTIASCFSVFAISFFALPAGILG) form a helical membrane-spanning segment. Over 339-652 (SGFALKVQQK…VPRMTQDNIS (314 aa)) the chain is Cytoplasmic. The segment at 360–372 (AAASLIQTAWRCY) is interaction with CALM. The disordered stretch occupies residues 393–419 (HHLMSPSPKPKKSAMVKKKKIRTERDE). Positions 401-414 (KPKKSAMVKKKKIR) are enriched in basic residues. Positions 504-518 (KVIRRMQYFVAKKKF) are interaction with CALM; calcium-dependent. Residues 524–561 (PYDVRDVIEQYSQGHLNLMVRIKELQRRLDQSLGKPSL) form an interaction with KCNE1 C-terminus region. The segment at 577–605 (IGSRLNRVEDKVTQMDHKLNLITDMLHHL) is interaction with AKAP9. Residues 578 to 609 (GSRLNRVEDKVTQMDHKLNLITDMLHHLLTNQ) form a C-terminal assembly domain (tetramerization) region. Residues 609–652 (QQGSQSIRTPHRSNSLNSENHPSRNTLPTYEQLNVPRMTQDNIS) are disordered.

It belongs to the potassium channel family. KQT (TC 1.A.1.15) subfamily. Kv7.1/KCNQ1 sub-subfamily. As to quaternary structure, tetramer. Heterotetramer with KCNE1; targets to the membrane raft. Interacts (via C-terminus) with CALM; forms a heterotetramer in a calcium-independent manner. Interacts with KCNE2; form a heterooligomer complex that targets to the membrane raft and leading to currents with an apparently instantaneous activation, a rapid deactivation process and a linear current-voltage relationship and decreases the amplitude of the outward current. Interacts with KCNE3; four KCNE3 molecules are bound to one KCNQ1 tetramer (4:4 KCNQ1:KCNE3 stoichiometry); alters membrane raft localization; affects KCNQ1 structure and gating properties. Interacts with KCNE4; impairs KCNQ1 localization in lipid rafts and inhibits voltage-gated potassium channel activity. Interacts with KCNE5; impairs KCNQ1 localization in lipid rafts and only conducts current upon strong and continued depolarization.

It localises to the cell membrane. Its subcellular location is the cytoplasmic vesicle membrane. It is found in the membrane raft. The protein localises to the endoplasmic reticulum. The protein resides in the basolateral cell membrane. It catalyses the reaction K(+)(in) = K(+)(out). With respect to regulation, PIP2 molecule is essential to activate KCNQ channels by inducing the coupling of the voltage-sensing domain (VSD) and the pore-forming domain (PD). Upon channel activation, PIP2 disrupts the VSD-calmodulin/CALM interactions, causing the release of CALM from the VSD which triggers the opening of the gate. Calcium potentiates KCNQ1 channel current through calcium-bound CALM. Calcium-bound CALM competes with PIP2 to stabilize the channel open state. Its function is as follows. Pore-forming subunit of the voltage-gated potassium (Kv) channel involved in the regulation of cardiomyocyte excitability and important in normal development and functions of myocardium, inner ear, stomach and colon. Associates with KCNE beta subunits that modulates current kinetics. Induces a voltage-dependent by rapidly activating and slowly deactivating potassium-selective outward current. Also promotes a delayed voltage activated potassium current showing outward rectification characteristic. During beta-adrenergic receptor stimulation participates in cardiac repolarization by associating with KCNE1 to form the I(Ks) cardiac potassium current that increases the amplitude and slows down the activation kinetics of outward potassium current I(Ks). When associated with KCNE3, forms the potassium channel that is important for cyclic AMP-stimulated intestinal secretion of chloride ions. When associated with KCNE2, forms a heterooligomer complex leading to currents with an apparently instantaneous activation, a rapid deactivation process and a linear current-voltage relationship and decreases the amplitude of the outward current. When associated with KCNE4, inhibits voltage-gated potassium channel activity. When associated with KCNE5, this complex only conducts current upon strong and continued depolarization. The sequence is that of Potassium voltage-gated channel subfamily KQT member 1 from Xenopus laevis (African clawed frog).